A 605-amino-acid chain; its full sequence is Lysophospholipase 1 (605 aa).

An N-terminal signal peptide occupies residues 1 to 17; the sequence is MILHHLLILLIINYCVA. Residues 30–565 enclose the PLA2c domain; it reads SCPSSQLIRS…ENYCWDGTIY (536 aa). Asn199, Asn261, Asn399, Asn451, Asn465, Asn492, and Asn573 each carry an N-linked (GlcNAc...) asparagine glycan.

The protein belongs to the lysophospholipase family.

It is found in the secreted. It catalyses the reaction a 1-acyl-sn-glycero-3-phosphocholine + H2O = sn-glycerol 3-phosphocholine + a fatty acid + H(+). Catalyzes the release of fatty acids from lysophospholipids. Phospholipase B may well contribute to pathogenicity by abetting the fungus in damaging and traversing host cell membranes, processes which likely increase the rapidity of disseminated infection. This Candida albicans (strain SC5314 / ATCC MYA-2876) (Yeast) protein is Lysophospholipase 1.